The sequence spans 415 residues: Serine hydroxymethyltransferase (415 aa).

Residues leucine 122 and 126–128 (GHL) each bind (6S)-5,6,7,8-tetrahydrofolate. Lysine 230 carries the N6-(pyridoxal phosphate)lysine modification.

The protein belongs to the SHMT family. As to quaternary structure, homodimer. It depends on pyridoxal 5'-phosphate as a cofactor.

Its subcellular location is the cytoplasm. It catalyses the reaction (6R)-5,10-methylene-5,6,7,8-tetrahydrofolate + glycine + H2O = (6S)-5,6,7,8-tetrahydrofolate + L-serine. It functions in the pathway one-carbon metabolism; tetrahydrofolate interconversion. It participates in amino-acid biosynthesis; glycine biosynthesis; glycine from L-serine: step 1/1. Catalyzes the reversible interconversion of serine and glycine with tetrahydrofolate (THF) serving as the one-carbon carrier. This reaction serves as the major source of one-carbon groups required for the biosynthesis of purines, thymidylate, methionine, and other important biomolecules. Also exhibits THF-independent aldolase activity toward beta-hydroxyamino acids, producing glycine and aldehydes, via a retro-aldol mechanism. In Leptothrix cholodnii (strain ATCC 51168 / LMG 8142 / SP-6) (Leptothrix discophora (strain SP-6)), this protein is Serine hydroxymethyltransferase.